A 581-amino-acid polypeptide reads, in one-letter code: DNA primase (581 aa).

A CHC2-type zinc finger spans residues cysteine 40 to cysteine 64. In terms of domain architecture, Toprim spans asparagine 259–proline 341. Glutamate 265, aspartate 309, and aspartate 311 together coordinate Mg(2+).

It belongs to the DnaG primase family. Monomer. Interacts with DnaB. It depends on Zn(2+) as a cofactor. The cofactor is Mg(2+).

It catalyses the reaction ssDNA + n NTP = ssDNA/pppN(pN)n-1 hybrid + (n-1) diphosphate.. RNA polymerase that catalyzes the synthesis of short RNA molecules used as primers for DNA polymerase during DNA replication. The protein is DNA primase of Escherichia coli O6:H1 (strain CFT073 / ATCC 700928 / UPEC).